Reading from the N-terminus, the 203-residue chain is Non-histone protein 10 (203 aa).

Serine 2 carries the N-acetylserine modification. Disordered regions lie at residues 78-97 (KSKTKRHKVKERDPNMPKRP) and 161-203 (ISNI…VSSN). Residues 94-158 (PKRPTNAYLL…RYQMEMEIYN (65 aa)) constitute a DNA-binding region (HMG box).

In terms of assembly, component of the chromatin-remodeling INO80 complex, at least composed of ARP4, ARP5, ARP8, RVB1, RVB2, TAF14, NHP10, IES1, IES3, IES4, IES6, ACT1, IES2, IES5 and INO80.

The protein localises to the nucleus. Its function is as follows. Probably involved in transcription regulation via its interaction with the INO80 complex, a chromatin remodeling complex. This is Non-histone protein 10 (NHP10) from Saccharomyces cerevisiae (strain ATCC 204508 / S288c) (Baker's yeast).